A 202-amino-acid chain; its full sequence is Holliday junction branch migration complex subunit RuvA (202 aa).

The tract at residues 1-64 is domain I; the sequence is MFAYIRGRLE…EDVISLYGFL (64 aa). The interval 65-143 is domain II; sequence TQEELNVFEL…KEQLTEYAQS (79 aa). Residues 144–152 are flexible linker; it reads EEGGKVLDT. Positions 152–202 are domain III; sequence TDSSKMAEAVSALMVLGYSPAEANKAVSAVYREDMDIETIIKNALKGLARP.

This sequence belongs to the RuvA family. As to quaternary structure, homotetramer. Forms an RuvA(8)-RuvB(12)-Holliday junction (HJ) complex. HJ DNA is sandwiched between 2 RuvA tetramers; dsDNA enters through RuvA and exits via RuvB. An RuvB hexamer assembles on each DNA strand where it exits the tetramer. Each RuvB hexamer is contacted by two RuvA subunits (via domain III) on 2 adjacent RuvB subunits; this complex drives branch migration. In the full resolvosome a probable DNA-RuvA(4)-RuvB(12)-RuvC(2) complex forms which resolves the HJ.

The protein localises to the cytoplasm. The RuvA-RuvB-RuvC complex processes Holliday junction (HJ) DNA during genetic recombination and DNA repair, while the RuvA-RuvB complex plays an important role in the rescue of blocked DNA replication forks via replication fork reversal (RFR). RuvA specifically binds to HJ cruciform DNA, conferring on it an open structure. The RuvB hexamer acts as an ATP-dependent pump, pulling dsDNA into and through the RuvAB complex. HJ branch migration allows RuvC to scan DNA until it finds its consensus sequence, where it cleaves and resolves the cruciform DNA. This is Holliday junction branch migration complex subunit RuvA from Acetivibrio thermocellus (strain ATCC 27405 / DSM 1237 / JCM 9322 / NBRC 103400 / NCIMB 10682 / NRRL B-4536 / VPI 7372) (Clostridium thermocellum).